The following is a 314-amino-acid chain: Jacalin-related lectin 9 (314 aa).

The first 23 residues, 1–23, serve as a signal peptide directing secretion; sequence MIFIYIFLFLSSAIIDSNGFAMA. 2 consecutive Jacalin-type lectin domains span residues 24 to 165 and 168 to 313; these read QKLE…YLTK and PTKS…YFSP.

It belongs to the jacalin lectin family.

The protein is Jacalin-related lectin 9 (JAL9) of Arabidopsis thaliana (Mouse-ear cress).